Consider the following 225-residue polypeptide: C-type lectin domain-containing protein 91 (225 aa).

Positions 1–21 (MRSTYILIIVPLIIIGGGVVA) are cleaved as a signal peptide. The 131-residue stretch at 85–215 (YSDSCYFIET…CTMAFKSICE (131 aa)) folds into the C-type lectin domain. 2 cysteine pairs are disulfide-bonded: Cys106–Cys214 and Cys185–Cys206. N-linked (GlcNAc...) asparagine glycosylation occurs at Asn217.

It is found in the secreted. This chain is C-type lectin domain-containing protein 91 (clec-91), found in Caenorhabditis elegans.